A 183-amino-acid polypeptide reads, in one-letter code: Type II secretion system protein H (183 aa).

Residues 1–8 constitute a propeptide, leader sequence; sequence MRRHRQSG. Phe9 carries the post-translational modification N-methylphenylalanine. A helical membrane pass occupies residues 9-28; the sequence is FTLLEVLLVAMLMGLVATAV.

Belongs to the GSP H family. As to quaternary structure, type II secretion is composed of four main components: the outer membrane complex, the inner membrane complex, the cytoplasmic secretion ATPase and the periplasm-spanning pseudopilus. Interacts with core component ExeG. Post-translationally, cleaved by prepilin peptidase. Methylated by prepilin peptidase at the amino group of the N-terminal phenylalanine once the leader sequence is cleaved by prepilin peptidase.

It is found in the cell inner membrane. Component of the type II secretion system required for the energy-dependent secretion of extracellular factors such as proteases and toxins from the periplasm. Part of the pseudopilus tip complex that is critical for the recognition and binding of secretion substrates. The protein is Type II secretion system protein H (exeH) of Aeromonas hydrophila.